A 465-amino-acid chain; its full sequence is Ribulose bisphosphate carboxylase large chain (465 aa).

K4 bears the N6,N6,N6-trimethyllysine mark. Substrate-binding residues include N113 and T163. The Proton acceptor role is filled by K165. K167 serves as a coordination point for substrate. Residues K191, D193, and E194 each coordinate Mg(2+). N6-carboxylysine is present on K191. H284 serves as the catalytic Proton acceptor. The substrate site is built by R285, H317, and S369.

Belongs to the RuBisCO large chain family. Type I subfamily. Heterohexadecamer of 8 large chains and 8 small chains; disulfide-linked. The disulfide link is formed within the large subunit homodimers. Mg(2+) serves as cofactor. The disulfide bond which can form in the large chain dimeric partners within the hexadecamer appears to be associated with oxidative stress and protein turnover.

The protein localises to the plastid. It is found in the chloroplast. The catalysed reaction is 2 (2R)-3-phosphoglycerate + 2 H(+) = D-ribulose 1,5-bisphosphate + CO2 + H2O. The enzyme catalyses D-ribulose 1,5-bisphosphate + O2 = 2-phosphoglycolate + (2R)-3-phosphoglycerate + 2 H(+). RuBisCO catalyzes two reactions: the carboxylation of D-ribulose 1,5-bisphosphate, the primary event in carbon dioxide fixation, as well as the oxidative fragmentation of the pentose substrate in the photorespiration process. Both reactions occur simultaneously and in competition at the same active site. The protein is Ribulose bisphosphate carboxylase large chain of Cassia fistula (Golden shower tree).